The sequence spans 315 residues: Transaldolase (315 aa).

The active-site Schiff-base intermediate with substrate is Lys-128.

This sequence belongs to the transaldolase family. Type 1 subfamily. In terms of assembly, homodimer.

Its subcellular location is the cytoplasm. It carries out the reaction D-sedoheptulose 7-phosphate + D-glyceraldehyde 3-phosphate = D-erythrose 4-phosphate + beta-D-fructose 6-phosphate. It functions in the pathway carbohydrate degradation; pentose phosphate pathway; D-glyceraldehyde 3-phosphate and beta-D-fructose 6-phosphate from D-ribose 5-phosphate and D-xylulose 5-phosphate (non-oxidative stage): step 2/3. In terms of biological role, transaldolase is important for the balance of metabolites in the pentose-phosphate pathway. This Opitutus terrae (strain DSM 11246 / JCM 15787 / PB90-1) protein is Transaldolase.